A 257-amino-acid polypeptide reads, in one-letter code: Glutamate racemase (257 aa).

Residues 12 to 13 and 44 to 45 contribute to the substrate site; these read DS and YG. Residue C75 is the Proton donor/acceptor of the active site. 76 to 77 contacts substrate; the sequence is NT. Residue C185 is the Proton donor/acceptor of the active site. 186–187 lines the substrate pocket; it reads TH.

This sequence belongs to the aspartate/glutamate racemases family.

The enzyme catalyses L-glutamate = D-glutamate. It functions in the pathway cell wall biogenesis; peptidoglycan biosynthesis. Provides the (R)-glutamate required for cell wall biosynthesis. The protein is Glutamate racemase of Clostridium botulinum (strain Kyoto / Type A2).